We begin with the raw amino-acid sequence, 783 residues long: Polyadenylate-binding protein, cytoplasmic and nuclear (783 aa).

The interval 16 to 65 (DLGNTSLGGGDNRAAPAINTNVAPGEYQTADPDTAGPTPSSAAPHPQSSA) is disordered. Low complexity predominate over residues 54–65 (PSSAAPHPQSSA). RRM domains follow at residues 65–143 (ASLY…WSQR), 153–230 (GNVF…YHIP), 246–323 (TNIY…RAQK), and 349–471 (VNLY…LAQR). 3 disordered regions span residues 381–428 (MRDA…KGDR), 596–671 (AAAL…AAGG), and 752–783 (VKSQ…EEKA). Residues 396–406 (GKDKENKKEGE) show a composition bias toward basic and acidic residues. Residues 407 to 416 (QAAEAEGEAE) are compositionally biased toward acidic residues. Residues 417–428 (GAEKKTEKKGDR) are compositionally biased toward basic and acidic residues. The span at 601–614 (NGRGGPGGPGGRGM) shows a compositional bias: gly residues. The segment covering 630–641 (AGFPPNGRPQNG) has biased composition (low complexity). Residues 642–655 (NMGGRGGPGRGGNF) are compositionally biased toward gly residues. The span at 656 to 671 (AAGRGAPPAGPLAAGG) shows a compositional bias: low complexity. The PABC domain maps to 676–753 (SSLLQSQLTA…AMAVYDEYVK (78 aa)). The segment covering 770-783 (EAEKPKEEKAEEKA) has biased composition (basic and acidic residues).

This sequence belongs to the polyadenylate-binding protein type-1 family.

It is found in the cytoplasm. It localises to the nucleus. Functionally, binds the poly(A) tail of mRNA. Appears to be an important mediator of the multiple roles of the poly(A) tail in mRNA biogenesis, stability and translation. In the nucleus, involved in both mRNA cleavage and polyadenylation. Is also required for efficient mRNA export to the cytoplasm. Acts in concert with a poly(A)-specific nuclease (PAN) to affect poly(A) tail shortening, which may occur concomitantly with either nucleocytoplasmic mRNA transport or translational initiation. In the cytoplasm, stimulates translation initiation and regulates mRNA decay through translation termination-coupled poly(A) shortening, probably mediated by PAN. This Chaetomium globosum (strain ATCC 6205 / CBS 148.51 / DSM 1962 / NBRC 6347 / NRRL 1970) (Soil fungus) protein is Polyadenylate-binding protein, cytoplasmic and nuclear (PAB1).